A 121-amino-acid polypeptide reads, in one-letter code: MIQQETYLTVADNSGAKRLQCIRVLGSNRRYAHVGDVIVAAVKDAVPNMGVKKSDVVKAVVVRTKATLRRETGNSIRFDDNAAVLINEDKNPRGTRVFGPVARELRERNYTKIVSLAPEVI.

This sequence belongs to the universal ribosomal protein uL14 family. In terms of assembly, part of the 50S ribosomal subunit. Forms a cluster with proteins L3 and L19. In the 70S ribosome, L14 and L19 interact and together make contacts with the 16S rRNA in bridges B5 and B8.

In terms of biological role, binds to 23S rRNA. Forms part of two intersubunit bridges in the 70S ribosome. This Prochlorococcus marinus (strain SARG / CCMP1375 / SS120) protein is Large ribosomal subunit protein uL14.